A 334-amino-acid polypeptide reads, in one-letter code: L-lactate dehydrogenase B chain (334 aa).

Residue Ala-2 is modified to N-acetylalanine. N6-acetyllysine is present on Lys-7. Ser-44 carries the phosphoserine modification. NAD(+) is bound by residues 53–58 (DVLEDK) and Arg-100. Lys-58 is subject to N6-acetyllysine. Position 107 (Arg-107) interacts with substrate. Position 119 is an N6-acetyllysine (Lys-119). Asn-139 lines the NAD(+) pocket. Asn-139 and Arg-170 together coordinate substrate. The active-site Proton acceptor is the His-194. Tyr-240 carries the phosphotyrosine modification. Thr-249 is a substrate binding site. Residue Lys-329 is modified to N6-acetyllysine.

This sequence belongs to the LDH/MDH superfamily. LDH family. As to quaternary structure, homotetramer. Interacts with PTEN upstream reading frame protein MP31; the interaction leads to inhibition of mitochondrial lactate dehydrogenase activity, preventing conversion of lactate to pyruvate in mitochondria.

It is found in the cytoplasm. It localises to the mitochondrion inner membrane. It carries out the reaction (S)-lactate + NAD(+) = pyruvate + NADH + H(+). The protein operates within fermentation; pyruvate fermentation to lactate; (S)-lactate from pyruvate: step 1/1. Functionally, interconverts simultaneously and stereospecifically pyruvate and lactate with concomitant interconversion of NADH and NAD(+). The sequence is that of L-lactate dehydrogenase B chain (LDHB) from Bos taurus (Bovine).